A 121-amino-acid polypeptide reads, in one-letter code: Ribonuclease P protein component (121 aa).

It belongs to the RnpA family. In terms of assembly, consists of a catalytic RNA component (M1 or rnpB) and a protein subunit.

It carries out the reaction Endonucleolytic cleavage of RNA, removing 5'-extranucleotides from tRNA precursor.. RNaseP catalyzes the removal of the 5'-leader sequence from pre-tRNA to produce the mature 5'-terminus. It can also cleave other RNA substrates such as 4.5S RNA. The protein component plays an auxiliary but essential role in vivo by binding to the 5'-leader sequence and broadening the substrate specificity of the ribozyme. This Erythrobacter litoralis (strain HTCC2594) protein is Ribonuclease P protein component.